Here is a 213-residue protein sequence, read N- to C-terminus: Protein-L-isoaspartate O-methyltransferase (213 aa).

Ser-58 is an active-site residue.

It belongs to the methyltransferase superfamily. L-isoaspartyl/D-aspartyl protein methyltransferase family.

The protein resides in the cytoplasm. The enzyme catalyses [protein]-L-isoaspartate + S-adenosyl-L-methionine = [protein]-L-isoaspartate alpha-methyl ester + S-adenosyl-L-homocysteine. Its function is as follows. Catalyzes the methyl esterification of L-isoaspartyl residues in peptides and proteins that result from spontaneous decomposition of normal L-aspartyl and L-asparaginyl residues. It plays a role in the repair and/or degradation of damaged proteins. The polypeptide is Protein-L-isoaspartate O-methyltransferase (Chlorobaculum tepidum (strain ATCC 49652 / DSM 12025 / NBRC 103806 / TLS) (Chlorobium tepidum)).